The following is a 149-amino-acid chain: Calmodulin (149 aa).

An N-acetylalanine modification is found at Ala-2. EF-hand domains follow at residues 8–43 (EQIAEFKEAFSLFDKDGDGTITTKELGTVMRSLGQN), 44–79 (PTEAELQDMINEVDSDGNGTIDFPEFLSLMARKMKD), 81–116 (DTEEELIEAFKVFDRDGNGFISAAELRHVMTNLGEK), and 117–149 (LTDEEVDEMIREADVDGDGQINYEEFVKMMMAK). Ca(2+) is bound by residues Asp-21, Asp-23, Asp-25, Thr-27, Glu-32, Asp-57, Asp-59, Asn-61, Thr-63, Glu-68, Asp-94, Asp-96, Asn-98, and Glu-105. N6,N6,N6-trimethyllysine is present on Lys-116. Ca(2+) contacts are provided by Asp-130, Asp-132, Asp-134, Gln-136, and Glu-141.

The protein belongs to the calmodulin family.

Calmodulin mediates the control of a large number of enzymes, ion channels and other proteins by Ca(2+). Among the enzymes to be stimulated by the calmodulin-Ca(2+) complex are a number of protein kinases and phosphatases. The chain is Calmodulin from Heterocapsa triquetra (Dinoflagellate).